Consider the following 238-residue polypeptide: Phosphoglycolate phosphatase (238 aa).

The active-site Nucleophile is the aspartate 8. Aspartate 8 and aspartate 10 together coordinate Mg(2+). Lysine 163 provides a ligand contact to substrate. Residues aspartate 186 and aspartate 190 each coordinate Mg(2+).

It belongs to the archaeal SPP-like hydrolase family. Requires Mg(2+) as cofactor.

It catalyses the reaction 2-phosphoglycolate + H2O = glycolate + phosphate. Functionally, catalyzes the dephosphorylation of 2-phosphoglycolate. The protein is Phosphoglycolate phosphatase of Staphylothermus marinus (strain ATCC 43588 / DSM 3639 / JCM 9404 / F1).